Here is a 99-residue protein sequence, read N- to C-terminus: Aspartyl/glutamyl-tRNA(Asn/Gln) amidotransferase subunit C (99 aa).

This sequence belongs to the GatC family. As to quaternary structure, heterotrimer of A, B and C subunits.

It carries out the reaction L-glutamyl-tRNA(Gln) + L-glutamine + ATP + H2O = L-glutaminyl-tRNA(Gln) + L-glutamate + ADP + phosphate + H(+). The catalysed reaction is L-aspartyl-tRNA(Asn) + L-glutamine + ATP + H2O = L-asparaginyl-tRNA(Asn) + L-glutamate + ADP + phosphate + 2 H(+). Functionally, allows the formation of correctly charged Asn-tRNA(Asn) or Gln-tRNA(Gln) through the transamidation of misacylated Asp-tRNA(Asn) or Glu-tRNA(Gln) in organisms which lack either or both of asparaginyl-tRNA or glutaminyl-tRNA synthetases. The reaction takes place in the presence of glutamine and ATP through an activated phospho-Asp-tRNA(Asn) or phospho-Glu-tRNA(Gln). This Mycolicibacterium smegmatis (strain ATCC 700084 / mc(2)155) (Mycobacterium smegmatis) protein is Aspartyl/glutamyl-tRNA(Asn/Gln) amidotransferase subunit C.